The primary structure comprises 501 residues: MLLQGMRLSQRLHKRHLFASKILTWTTNPAHIRHLHDIRPPASNFNTQESAPIPESPANSPTRPQMAPKPNLKKKNRSLMYSIIGVSIVGLYFWFKSNSRKQKLPLSAQKVWKEAIWQESDKMDFNYKEALRRYIEALDECDRSHVDLLSDDYTRIELKIAEMYEKLNMLEEAQNLYQELLSRFFEALNVPGKVDESERGEVLRKDLRILIKSLEINKDIESGKRKLLQHLLLAQEEILSKSPELKEFFENRKKKLSMVKDINRDPNDDFKTFVSEENIKFDEQGYMILDLEKNSSAWEPFKEEFFTARDLYTAYCLSSKDIAAALSCKITSVEWMVMADMPPGQILLSQANLGSLFYLQAEKLEADLNQLEQKKSKESNQELDMGTYIKAVRFVRKNRDLCLERAQKCYDSVIAFAKRNRKIRFHVKDQLDPSIAQSIALSTYGMGVLSLHEGVLAKAEKLFKDSITMAKETEFNELLAEAEKELEKTTVLKAAKKEGLN.

At 1–77 (MLLQGMRLSQ…PKPNLKKKNR (77 aa)) the chain is on the mitochondrial matrix side. A disordered region spans residues 39–72 (RPPASNFNTQESAPIPESPANSPTRPQMAPKPNL). Residues 78-95 (SLMYSIIGVSIVGLYFWF) form a helical membrane-spanning segment. Over 96–501 (KSNSRKQKLP…LKAAKKEGLN (406 aa)) the chain is Mitochondrial intermembrane. 4 TPR repeats span residues 109–144 (QKVW…CDRS), 154–187 (TRIE…FFEA), 386–420 (GTYI…AKRN), and 440–473 (ALST…AKET).

This sequence belongs to the MGR3 family. In terms of assembly, component of the mitochondrial inner membrane i-AAA protease supercomplex composed of MGR1, MGR3 and YME1. With MGR1, forms a subcomplex that binds to YME1 and to substrates to facilitate proteolysis.

Its subcellular location is the mitochondrion inner membrane. Functionally, component of the mitochondrial inner membrane i-AAA protease supercomplex, which degrades misfolded mitochondrial proteins. Together with MGR1, functions in an adapter complex that targets substrates to the i-AAA protease for degradation. Required for growth of cells lacking the mitochondrial genome. The sequence is that of Mitochondrial inner membrane i-AAA protease supercomplex subunit MGR3 (MGR3) from Saccharomyces cerevisiae (strain ATCC 204508 / S288c) (Baker's yeast).